A 98-amino-acid chain; its full sequence is Large ribosomal subunit protein uL23 (98 aa).

This sequence belongs to the universal ribosomal protein uL23 family. Part of the 50S ribosomal subunit. Contacts protein L29, and trigger factor when it is bound to the ribosome.

Functionally, one of the early assembly proteins it binds 23S rRNA. One of the proteins that surrounds the polypeptide exit tunnel on the outside of the ribosome. Forms the main docking site for trigger factor binding to the ribosome. In Dinoroseobacter shibae (strain DSM 16493 / NCIMB 14021 / DFL 12), this protein is Large ribosomal subunit protein uL23.